We begin with the raw amino-acid sequence, 513 residues long: NAD(P)H-quinone oxidoreductase subunit 2 (513 aa).

14 helical membrane passes run Thr-12 to Ile-32, Leu-41 to Ile-61, Leu-77 to Val-97, Ser-104 to Leu-124, Met-130 to Tyr-150, Leu-165 to Phe-185, Ile-199 to Phe-219, Pro-238 to Ile-258, Trp-272 to Ile-292, Met-300 to Thr-320, Ile-328 to Phe-348, Leu-372 to Gly-392, Leu-394 to Val-414, and Ala-456 to Ile-476. A compositionally biased stretch (polar residues) spans Thr-494 to Ala-505. The disordered stretch occupies residues Thr-494–Arg-513.

The protein belongs to the complex I subunit 2 family. NDH-1 can be composed of about 15 different subunits; different subcomplexes with different compositions have been identified which probably have different functions.

Its subcellular location is the cell inner membrane. It catalyses the reaction a plastoquinone + NADH + (n+1) H(+)(in) = a plastoquinol + NAD(+) + n H(+)(out). It carries out the reaction a plastoquinone + NADPH + (n+1) H(+)(in) = a plastoquinol + NADP(+) + n H(+)(out). Its function is as follows. NDH-1 shuttles electrons from an unknown electron donor, via FMN and iron-sulfur (Fe-S) centers, to quinones in the respiratory and/or the photosynthetic chain. The immediate electron acceptor for the enzyme in this species is believed to be plastoquinone. Couples the redox reaction to proton translocation, and thus conserves the redox energy in a proton gradient. Cyanobacterial NDH-1 also plays a role in inorganic carbon-concentration. The chain is NAD(P)H-quinone oxidoreductase subunit 2 from Gloeobacter violaceus (strain ATCC 29082 / PCC 7421).